We begin with the raw amino-acid sequence, 342 residues long: Fatty acid desaturase 6 (342 aa).

The next 2 helical transmembrane spans lie at 39–59 (GVDCAILALSLLALPPGFLCL) and 63–83 (SPLVFALGITILGVCHYTLTV). The Histidine box-1 signature appears at 87–91 (HLATH). Residues 124–128 (HVKMH) carry the Histidine box-2 motif. 2 helical membrane-spanning segments follow: residues 151-171 (YVYMFLAPLLIPIITPLVAVE) and 185-205 (LGLISLGLYSQYWLLLNVSGF). Positions 277-281 (HVEHH) match the Histidine box-3 motif.

This sequence belongs to the fatty acid desaturase type 1 family.

It is found in the membrane. The protein operates within lipid metabolism; fatty acid metabolism. This is Fatty acid desaturase 6 (FADS6) from Bos taurus (Bovine).